A 750-amino-acid polypeptide reads, in one-letter code: MFIRNVKLIKPSPVRFISPIPFSFPISRSIKISSIRYFTNKSTSNFKSTSSSSSLKSTSTSTSTSTSKTTPKTLSKPPPKVKPPIQDNDTTSSGSSSSENSESFMLKSLFKTIWPKNNLNFKIRVIIALSLLVGAKILNVQVPFYFKQIIDTMNIDWTNEVGVFSTVIGSLILAYGGARFGAVLFGELRNAIFASVAQSAIRRVAYNTFVKLLNMDLQFHLSRQTGGLTRAIDRGTKGISYVLSAMVFHIIPITLEISIVCGILTYNYGASFAAMTFVTMLAYSIFTIQTTAWRTKFRRQANNADNQAANVALDSLINYESVKIFNNELYQASKYDKALMKYQQSSVKIATSLAFLNSGQNFIFTSALTAMMYMGCQGVYTGELTVGDLVLINQLVFQLSVPLNFLGSVYRELKQSLLDMENLFQLQNQPIRIKEIPNAPPLKLNNNNNNNNNNNNNNNNSLPGEIRFENVSFGYHPDRPILNNASFTIPAGQKVAIVGPSGSGKSTILRLIFRFYDINQGRILIDGQDISKVSLESLRKLIGIVPQETPLFNDTILENIRYGRLDASDEEIYRVINQVQLNKLIDDLPDGVQTIVGERGMMISGGEKQRLAMARLLLKRAPITFFDEATSALDTHTEQALLKTIRSVFKQQHQTNVSIAHRLRTIADADKIIVLNKGQVVEEGTHWQLLNEQPNSLYAQLWNIQENLDIEKELLQGDEEEEELTEKLKLDKQELEQEAKLFNSQTFEKK.

The N-terminal 16 residues, 1-16, are a transit peptide targeting the mitochondrion; that stretch reads MFIRNVKLIKPSPVRF. Residues 17-124 lie on the Mitochondrial matrix side of the membrane; it reads ISPIPFSFPI…PKNNLNFKIR (108 aa). 2 stretches are compositionally biased toward low complexity: residues 43-75 and 87-100; these read TSNF…KTLS and DNDT…SSEN. Positions 43-100 are disordered; sequence TSNFKSTSSSSSLKSTSTSTSTSTSKTTPKTLSKPPPKVKPPIQDNDTTSSGSSSSEN. A helical transmembrane segment spans residues 125–146; it reads VIIALSLLVGAKILNVQVPFYF. An ABC transmembrane type-1 domain is found at 125-415; the sequence is VIIALSLLVG…LGSVYRELKQ (291 aa). Residues 147–169 are Mitochondrial intermembrane-facing; sequence KQIIDTMNIDWTNEVGVFSTVIG. Residues 170–193 traverse the membrane as a helical segment; sequence SLILAYGGARFGAVLFGELRNAIF. At 194-242 the chain is on the mitochondrial matrix side; it reads ASVAQSAIRRVAYNTFVKLLNMDLQFHLSRQTGGLTRAIDRGTKGISYV. A helical transmembrane segment spans residues 243–266; sequence LSAMVFHIIPITLEISIVCGILTY. N267 is a topological domain (mitochondrial intermembrane). The chain crosses the membrane as a helical span at residues 268 to 288; sequence YGASFAAMTFVTMLAYSIFTI. Over 289–354 the chain is Mitochondrial matrix; it reads QTTAWRTKFR…SSVKIATSLA (66 aa). Residues 294 to 298 and 357 to 360 each bind glutathione; these read RTKFR and NSGQ. A helical transmembrane segment spans residues 355 to 373; it reads FLNSGQNFIFTSALTAMMY. Residues 374–388 lie on the Mitochondrial intermembrane side of the membrane; it reads MGCQGVYTGELTVGD. Residues 389–410 traverse the membrane as a helical segment; sequence LVLINQLVFQLSVPLNFLGSVY. G407 serves as a coordination point for glutathione. The Mitochondrial matrix segment spans residues 411–750; sequence RELKQSLLDM…LFNSQTFEKK (340 aa). Positions 437 to 462 are disordered; sequence PNAPPLKLNNNNNNNNNNNNNNNNSL. The segment covering 445 to 460 has biased composition (low complexity); sequence NNNNNNNNNNNNNNNN. In terms of domain architecture, ABC transporter spans 466–702; sequence IRFENVSFGY…QPNSLYAQLW (237 aa). ATP-binding positions include Y475 and 499 to 510; that span reads GPSGSGKSTILR.

This sequence belongs to the ABC transporter superfamily. ABCB family. Heavy Metal importer (TC 3.A.1.210) subfamily. As to quaternary structure, homodimer.

The protein localises to the mitochondrion inner membrane. In terms of biological role, performs an essential function in the generation of cytoplasmic iron-sulfur proteins by mediating the ATP-dependent export of Fe/S cluster precursors synthesized by NFS1 and other mitochondrial proteins. Hydrolyzes ATP. Binds glutathione and may function by transporting a glutathione-conjugated iron-sulfur compound. This chain is Iron-sulfur clusters transporter ATM1, mitochondrial, found in Candida albicans (strain SC5314 / ATCC MYA-2876) (Yeast).